The sequence spans 574 residues: Glutamate--tRNA ligase (574 aa).

Positions 109-119 (PNPDFVIHMGN) match the 'HIGH' region motif.

This sequence belongs to the class-I aminoacyl-tRNA synthetase family. Glutamate--tRNA ligase type 2 subfamily.

The protein resides in the cytoplasm. The enzyme catalyses tRNA(Glu) + L-glutamate + ATP = L-glutamyl-tRNA(Glu) + AMP + diphosphate. Functionally, catalyzes the attachment of glutamate to tRNA(Glu) in a two-step reaction: glutamate is first activated by ATP to form Glu-AMP and then transferred to the acceptor end of tRNA(Glu). This is Glutamate--tRNA ligase from Aeropyrum pernix (strain ATCC 700893 / DSM 11879 / JCM 9820 / NBRC 100138 / K1).